The primary structure comprises 258 residues: Protein U52 (258 aa).

It belongs to the herpesviridae UL79 family.

This chain is Protein U52 (U52), found in Human herpesvirus 6A (strain Uganda-1102) (HHV-6 variant A).